A 448-amino-acid chain; its full sequence is Fibulin-5 (448 aa).

The signal sequence occupies residues 1–23 (MPGFKRILTVTVLALCLPTPGNA). Positions 42 to 82 (DVDECRTIPEACRGDMMCVNQNGGYLCIPRTNPVYRGPYSN) constitute an EGF-like 1; calcium-binding domain. Disulfide bonds link cysteine 46–cysteine 59, cysteine 53–cysteine 68, cysteine 131–cysteine 144, cysteine 138–cysteine 153, cysteine 155–cysteine 166, cysteine 172–cysteine 181, cysteine 177–cysteine 190, cysteine 192–cysteine 205, cysteine 211–cysteine 221, cysteine 217–cysteine 230, cysteine 232–cysteine 245, cysteine 251–cysteine 262, cysteine 258–cysteine 271, cysteine 273–cysteine 286, cysteine 292–cysteine 305, cysteine 299–cysteine 314, and cysteine 320–cysteine 332. The Cell attachment site signature appears at 54–56 (RGD). Residues 127 to 167 (DVDECATDSHQCNPTQICINTEGGYTCSCTDGYWLLEGQCL) enclose the EGF-like 2; calcium-binding domain. The EGF-like 3; calcium-binding domain occupies 168–206 (DIDECRYGYCQQLCANVPGSYSCTCNPGFTLNEDGRSCQ). Positions 207–246 (DVNECATENPCVQTCVNTYGSFICRCDPGYELEDDGVHCS) constitute an EGF-like 4; calcium-binding domain. The segment at 245–448 (CSDMDECSFS…LRIYVSQYPF (204 aa)) is interaction with LOXL1. Positions 247–287 (DMDECSFSEFLCQHECVNQPGTYFCSCPAGYILLDDNRSCQ) constitute an EGF-like 5; calcium-binding domain. Residues asparagine 283 and asparagine 296 are each glycosylated (N-linked (GlcNAc...) asparagine). An EGF-like 6; calcium-binding domain is found at 288–333 (DINECEHRNHTCILQQTCYNLQGGFKCIDPIRCEEPYLRISDNRCM).

This sequence belongs to the fibulin family. Homodimer. Monomer, homodimerizes in presence of Ca(2+). Interacts with ELN. Interacts (via N-terminus) with the integrins ITGAV/ITGB3, ITGAV/ITGB5 and ITGA9/ITGB1. Interacts with FBN1 (via N-terminal domain). Forms a ternary complex with ELN and FBN1. Interacts with EFEMP2 with moderate affinity. Interacts with LOXL1. N-glycosylated.

Its subcellular location is the secreted. It is found in the extracellular space. It localises to the extracellular matrix. Essential for elastic fiber formation, is involved in the assembly of continuous elastin (ELN) polymer and promotes the interaction of microfibrils and ELN. Stabilizes and organizes elastic fibers in the skin, lung and vasculature. Promotes adhesion of endothelial cells through interaction of integrins and the RGD motif. Vascular ligand for integrin receptors which may play a role in vascular development and remodeling. May act as an adapter that mediates the interaction between FBN1 and ELN. The sequence is that of Fibulin-5 (FBLN5) from Bos taurus (Bovine).